The sequence spans 403 residues: Acetate kinase (403 aa).

N13 contributes to the Mg(2+) binding site. K20 serves as a coordination point for ATP. R94 contacts substrate. The active-site Proton donor/acceptor is the D153. Residues 213 to 217 (HLGNG), 288 to 290 (DFR), and 336 to 340 (GIGEN) contribute to the ATP site. Residue E390 coordinates Mg(2+).

It belongs to the acetokinase family. As to quaternary structure, homodimer. It depends on Mg(2+) as a cofactor. Mn(2+) serves as cofactor.

It localises to the cytoplasm. The catalysed reaction is acetate + ATP = acetyl phosphate + ADP. It functions in the pathway metabolic intermediate biosynthesis; acetyl-CoA biosynthesis; acetyl-CoA from acetate: step 1/2. Its function is as follows. Catalyzes the formation of acetyl phosphate from acetate and ATP. Can also catalyze the reverse reaction. This chain is Acetate kinase, found in Buchnera aphidicola subsp. Schizaphis graminum (strain Sg).